The following is a 96-amino-acid chain: uncharacterized protein (96 aa).

The stretch at 9–86 (EELKSQAQVY…NKYADTVAER (78 aa)) forms a coiled coil.

The protein belongs to the WXG100 family. sagEsxA-like subfamily.

This is an uncharacterized protein from Clostridium acetobutylicum (strain ATCC 824 / DSM 792 / JCM 1419 / IAM 19013 / LMG 5710 / NBRC 13948 / NRRL B-527 / VKM B-1787 / 2291 / W).